Reading from the N-terminus, the 177-residue chain is Ribosome maturation factor RimP (177 aa).

This sequence belongs to the RimP family.

The protein resides in the cytoplasm. Its function is as follows. Required for maturation of 30S ribosomal subunits. The protein is Ribosome maturation factor RimP of Methylibium petroleiphilum (strain ATCC BAA-1232 / LMG 22953 / PM1).